The primary structure comprises 337 residues: Pantothenate synthetase (337 aa).

Met31–His38 lines the ATP pocket. The Proton donor role is filled by His38. A (R)-pantoate-binding site is contributed by Gln65. Gln65 contacts beta-alanine. Residue Gly152–Asp155 participates in ATP binding. Gln158 provides a ligand contact to (R)-pantoate. ATP contacts are provided by residues Val181 and Leu189–Arg192.

It belongs to the pantothenate synthetase family. In terms of assembly, homodimer.

It is found in the cytoplasm. It carries out the reaction (R)-pantoate + beta-alanine + ATP = (R)-pantothenate + AMP + diphosphate + H(+). Its pathway is cofactor biosynthesis; (R)-pantothenate biosynthesis; (R)-pantothenate from (R)-pantoate and beta-alanine: step 1/1. Functionally, catalyzes the condensation of pantoate with beta-alanine in an ATP-dependent reaction via a pantoyl-adenylate intermediate. The sequence is that of Pantothenate synthetase from Streptomyces coelicolor (strain ATCC BAA-471 / A3(2) / M145).